We begin with the raw amino-acid sequence, 2248 residues long: Zinc finger protein 407 (2248 aa).

Basic and acidic residues predominate over residues 1-32 (MMDSENKPENDEDEKINKEAQDLTKLSSHNED). Residues 1 to 84 (MMDSENKPEN…RRKLDEAEPL (84 aa)) are disordered. C2H2-type zinc fingers lie at residues 186-208 (LKCS…AESH), 215-238 (HTCC…KQAH), and 244-268 (FSCD…GKTH). 2 disordered regions span residues 291 to 322 (KKSR…GLRN) and 494 to 515 (SETQ…GLHS). The segment covering 494–504 (SETQEAEQGQG) has biased composition (polar residues). 3 consecutive C2H2-type zinc fingers follow at residues 528–551 (CACT…KRCH), 557–581 (FYCR…SNQH), and 615–639 (FLCT…TEKH). The segment at 667–700 (ESENAKESMDDSGKASQEEPLKSRVSHGNEVRHS) is disordered. Residues 669–699 (ENAKESMDDSGKASQEEPLKSRVSHGNEVRH) are compositionally biased toward basic and acidic residues. A C2H2-type 7 zinc finger spans residues 705-728 (FQCKKCFYKTRSSTVLTRHIKLRH). A disordered region spans residues 821 to 847 (LSQSGGSTKDDELASTTTPKRGRPKGN). C2H2-type zinc fingers lie at residues 850–873 (RTCS…RRKH) and 879–903 (YLCK…TKKH). The tract at residues 910–962 (EASGKHSSDIIVGPEGGSLEAGKKNAGSAVTMSDEHANKPAESPTSVLEKPDR) is disordered. C2H2-type zinc fingers lie at residues 1017–1040 (NKCL…KRKH) and 1046–1070 (FYCM…TEKH). S1262 carries the phosphoserine modification. C2H2-type zinc fingers lie at residues 1444 to 1468 (FHCL…SAGH) and 1486 to 1509 (FKCV…KGQH). A C2H2-type 14; degenerate zinc finger spans residues 1537–1561 (NVCKYCGKMCRSSNSMAFLAHIRTH). C2H2-type zinc fingers lie at residues 1567–1589 (FKCK…VKRH), 1595–1618 (YKCH…LGKH), 1628–1650 (FTCH…MKLH), 1656–1680 (FKCT…YRTH), 1686–1708 (FLCD…RRQH), 1714–1736 (FKCD…KRVH), 1742–1767 (YRCP…TGKH), and 1773–1796 (YNCP…KEQH).

It is found in the nucleus. May be involved in transcriptional regulation. This chain is Zinc finger protein 407 (ZNF407), found in Homo sapiens (Human).